A 681-amino-acid polypeptide reads, in one-letter code: Type VI secretion system spike protein VgrG1 (681 aa).

Positions 621–640 (NSGGSPSSGSGWGGKSPVDP) are disordered.

The protein belongs to the VgrG protein family.

The protein resides in the secreted. The enzyme catalyses L-arginyl-[protein] + NAD(+) = N(omega)-(ADP-D-ribosyl)-L-arginyl-[protein] + nicotinamide + H(+). Part of the type VI secretion system specialized secretion system, which delivers several virulence factors in both prokaryotic and eukaryotic cells during infection. Acts directly as an secreted effector with an actin ADP-ribosyltransferase activity that disrupts the host actin cytoskeleton, leading to a decrease in host cell viability and an increase in apoptosis. The polypeptide is Type VI secretion system spike protein VgrG1 (vgrG1) (Aeromonas hydrophila).